A 125-amino-acid chain; its full sequence is Holo-[acyl-carrier-protein] synthase (125 aa).

Residues D8 and E57 each coordinate Mg(2+).

Belongs to the P-Pant transferase superfamily. AcpS family. Mg(2+) serves as cofactor.

It is found in the cytoplasm. The enzyme catalyses apo-[ACP] + CoA = holo-[ACP] + adenosine 3',5'-bisphosphate + H(+). In terms of biological role, transfers the 4'-phosphopantetheine moiety from coenzyme A to a Ser of acyl-carrier-protein. The sequence is that of Holo-[acyl-carrier-protein] synthase from Geotalea daltonii (strain DSM 22248 / JCM 15807 / FRC-32) (Geobacter daltonii).